Reading from the N-terminus, the 440-residue chain is MKNYLSFGMFALLFALTFGTVKPVQAIAGPEWLLGRPSVNNSQLVVSVAGTVEGTNQEISLKFFEIDLTSRPAQGGKTEQGLRPKSKPLATDKGAMSHKLEKADLLKAIQEQLIANVHSNDGYFEVIDFASDATITDRNGKVYFADRDDSVTLPTQPVQEFLLSGHVRVRPYRPKAVHNSAERVNVNYEVSFVSETGNLDFTPSLKEQYHLTTLAVGDSLSSQELAAIAQFILSKKHPDYIITKRDSSIVTHDNDIFRTILPMDQEFTYHIKDREQAYKANSKTGIEEKTNNTDLISEKYYILKKGEKPYDPFDRSHLKLFTIKYVDVDTKALLKSEQLLTASERNLDFRDLYDPRDKAKLLYNNLDAFGIMGYTLTGKVEDNHDDTNRIITVYMGKRPEGENASYHLAYDKDRYTEEEREVYSYLRDTGTPIPDNPKDK.

An N-terminal signal peptide occupies residues 1 to 26 (MKNYLSFGMFALLFALTFGTVKPVQA). The disordered stretch occupies residues 72–94 (PAQGGKTEQGLRPKSKPLATDKG).

Its function is as follows. This protein is not a protease, but it activates plasminogen by complexing with it. As a potential virulence factor, it is thought to prevent the formation of effective fibrin barriers around the site of infection, thereby contributing to the invasiveness of the cells. In Streptococcus pyogenes, this protein is Streptokinase (ska).